A 1238-amino-acid polypeptide reads, in one-letter code: MDGCSAASTFLTDSLELELGTEWCKPPCFSCAFDNREGKFSGESYLASGALKRLILNLDPLPTNFEEDTVELFGFQWVTETALVYSCRELFHLFRQQIFNLESLVQVSCDFGKIATLHAKADSIRQQCVVFLHYIKVFIFRCLKVQEAESHSRPAHPYEALEAQLPSMLVDELRGLLLYIGHLAALPSVTVGAFVNQNQMKLFPPSWHLLHLYLDTHWLVLEILHILGEKLKQVVYGRQFIGQAGDNLTNVSLFEEHCEHLFCDLICLSLNRFDKVMPSEALLISHCPCSCVKELWVLLIHLLDHRRKWSVADSFWNWLNKLLRTLFEKSSDQRRSSVSLTQAKDPLGFSWWISVHVASLYQIDRHGVSDKMKQMESNWSFIEELLKRSVTVQDSILEEQLRMHLHCCLTLCDFWEPNISVVTILWEYYSKNLNSSFSISWLPLKGLTNIIKSPLSMLTLVRNCCSDKQDPDLYKSSSSYIIFLCILAKVVKKAMRTSGPHPWKQVKGRIYSKFHQKRMEELTEVGLQNFFSLFLLLAAVAEIEDVASHVLDLLRFLRPASMSSHGALVWKGQMAFLLMYAQKNLDIGVWAEKLSCEFQEKAKEFLVSKNDEMVQRHALWTLLCIYIDGVQEVFETSSCLYPSHEHLLNDGFSMLLPACRESELRTVLNFLQAVLARIRSVHQQLCQELQRENVDLTVQSSLSAKERPLAAVAGALWRHFFSFLKSQRMTQVVPLSQLADAAADFTLLAVDMPNTAPPDLQPQPVISIIQLFGWDDIIWPQVVARYLSHLLQNSTVYEALSQSSCVSSQSLTIRSWVRCVLQMHIKHLSDPDLLIDVNPEQAVEKEYMEQLAEMTRLLFTLSEVKSVFSKAQIEQLPSPDDPKQALIQFLEAVGVTYRTLQTFSDKSAMVTKSLEYLGEVLKYIKPYLGKKVSSAGLQLTYGIMGILVKSWAHIFATSKAQKLLFRIIDCLLLPHTVLQQDKELPGPMLTAIQKTLPLYLQGICIVCCQSQNPNAYLNQLLRNVIEQYIGRFLPTSPCVSDLGQHPVLLALRNPASVPSMTPLRKHTVHAIRKSYLEFKGSSPPPRLASVLAFVLQLFKDTEMGACDLELLLPGILKCLVLVNEPQVKKLATENLQCMVQTCQVGSEGGPATQLTSLFRQFIQDYGMQYSYQVYSILETVATLNQHVVIQLIPTLTQSLKDSELKWGLGRNIAQREAYSRLLSGLGQVGQGEKQRLEK.

The protein belongs to the MMS22 family. MMS22L subfamily. Component of the MMS22L-TONSL complex, a complex at least composed of MMS22L and TONSL/NFKBIL2. Interacts with RAD51; interaction is direct. In terms of processing, degraded by the ubiquitin-proteasome system upon replication stress.

It localises to the nucleus. The protein resides in the chromosome. In terms of biological role, component of the MMS22L-TONSL complex, a complex that promotes homologous recombination-mediated repair of double-strand breaks (DSBs) at stalled or collapsed replication forks. The MMS22L-TONSL complex is required to maintain genome integrity during DNA replication. It mediates the assembly of RAD51 filaments on single-stranded DNA (ssDNA): the MMS22L-TONSL complex is recruited to DSBs following histone replacement by histone chaperones and eviction of the replication protein A complex (RPA/RP-A) from DSBs. Following recruitment to DSBs, the TONSL-MMS22L complex promotes recruitment of RAD51 filaments and subsequent homologous recombination. Within the complex, MMS22L acts by binding ssDNA. The polypeptide is Protein MMS22-like (Mms22l) (Mus musculus (Mouse)).